The sequence spans 307 residues: Elongation factor Ts (307 aa).

The segment at 80-83 is involved in Mg(2+) ion dislocation from EF-Tu; the sequence is TDFV.

It belongs to the EF-Ts family.

Its subcellular location is the cytoplasm. Associates with the EF-Tu.GDP complex and induces the exchange of GDP to GTP. It remains bound to the aminoacyl-tRNA.EF-Tu.GTP complex up to the GTP hydrolysis stage on the ribosome. This Clostridium botulinum (strain 657 / Type Ba4) protein is Elongation factor Ts.